Reading from the N-terminus, the 600-residue chain is Alpha pinene synthase, chloroplastic (600 aa).

The tract at residues 1-26 (MSSISMHARPLNISAANNHHPSWDRR) is disordered. The N-terminal 31 residues, 1–31 (MSSISMHARPLNISAANNHHPSWDRRVSKPR), are a transit peptide targeting the chloroplast. Mg(2+) is bound by residues D354, D358, D498, and E506. The DDXXD motif motif lies at 354 to 358 (DDVYD).

This sequence belongs to the terpene synthase family. Tpsa subfamily. It depends on Mg(2+) as a cofactor. Requires Mn(2+) as cofactor. As to expression, barely detectable in leaves.

The protein localises to the plastid. Its subcellular location is the chloroplast. It catalyses the reaction (2E)-geranyl diphosphate = alpha-pinene + diphosphate. Its pathway is secondary metabolite biosynthesis; terpenoid biosynthesis. Its function is as follows. Monoterpene synthase involved in the biosynthesis of volatile compounds widely used in aromatherapy and folk medicine, and present in culinary herbs. Mediates the conversion of (2E)-geranyl diphosphate (GPP) into alpha-pinene and, as minor compounds, into alpha-phellandrene, limonene and alpha-terpinolene. This Lavandula stoechas (Butterfly lavender) protein is Alpha pinene synthase, chloroplastic.